A 102-amino-acid chain; its full sequence is ATP-dependent Clp protease adapter protein ClpS (102 aa).

Belongs to the ClpS family. Binds to the N-terminal domain of the chaperone ClpA.

In terms of biological role, involved in the modulation of the specificity of the ClpAP-mediated ATP-dependent protein degradation. This chain is ATP-dependent Clp protease adapter protein ClpS, found in Shewanella sediminis (strain HAW-EB3).